A 290-amino-acid chain; its full sequence is ATP synthase gamma chain (290 aa).

It belongs to the ATPase gamma chain family. As to quaternary structure, F-type ATPases have 2 components, CF(1) - the catalytic core - and CF(0) - the membrane proton channel. CF(1) has five subunits: alpha(3), beta(3), gamma(1), delta(1), epsilon(1). CF(0) has three main subunits: a, b and c.

Its subcellular location is the cell inner membrane. Its function is as follows. Produces ATP from ADP in the presence of a proton gradient across the membrane. The gamma chain is believed to be important in regulating ATPase activity and the flow of protons through the CF(0) complex. The sequence is that of ATP synthase gamma chain from Bacteroides fragilis (strain ATCC 25285 / DSM 2151 / CCUG 4856 / JCM 11019 / LMG 10263 / NCTC 9343 / Onslow / VPI 2553 / EN-2).